Reading from the N-terminus, the 122-residue chain is MIQKETNLVVADNSGAKKVRCIHVFGGTGRRYAAIGDQIMVTVKAAVPGGVVKKKDVCKAVVVRCAKEKKRKDGSYIRFDENAVVLLNAQGEPRGTRIFGPVARELRDRKYMKIVSLAPEVL.

Belongs to the universal ribosomal protein uL14 family. As to quaternary structure, part of the 50S ribosomal subunit. Forms a cluster with proteins L3 and L19. In the 70S ribosome, L14 and L19 interact and together make contacts with the 16S rRNA in bridges B5 and B8.

In terms of biological role, binds to 23S rRNA. Forms part of two intersubunit bridges in the 70S ribosome. In Prosthecochloris aestuarii (strain DSM 271 / SK 413), this protein is Large ribosomal subunit protein uL14.